Reading from the N-terminus, the 543-residue chain is MTSAATVTASFNDTFSVSDNVAVIVPETDTQVTYRDLSHMVGHFQTMFTNPNSPLYGAVFRQDTVAISMRNGLEFIVAFLGATMDAKIGAPLNPNYKEKEFNFYLNDLKSKAICVPKGTTKLQSSEILKSASTFGCFIVELAFDATRFRVEYDIYSPEDNYKRVIYRSLNNAKFVNTNPVKFPGFARSSDVALILHTSGTTSTPKTVPLLHLNIVRSTLNIANTYKLTPLDRSYVVMPLFHVHGLIGVLLSTFRTQGSVVVPDGFHPKLFWDQFVKYNCNWFSCVPTISMIMLNMPKPNPFPHIRFIRSCSSALAPATFHKLEKEFNAPVLEAYAMTEASHQMTSNNLPPGKRKPGTVGQPQGVTVVILDDNDNVLPPGKVGEVSIRGENVTLGYANNPKANKENFTKRENYFRTGDQGYFDPEGFLVLTGRIKELINRGGEKISPIELDGIMLSHPKIDEAVAFGVPDDMYGQVVQAAIVLKKGEKMTYEELVNFLKKHLASFKIPTKVYFVDKLPKTATGKIQRRVIAETFAKSSRNKSKL.

196–207 (HTSGTTSTPKTV) serves as a coordination point for ATP. An FACS motif is present at residues 410–458 (ENYFRTGDQGYFDPEGFLVLTGRIKELINRGGEKISPIELDGIMLSHPK). The C-terminal peroxisome targeting signal (PTS1) signature appears at 541 to 543 (SKL).

Belongs to the ATP-dependent AMP-binding enzyme family. As to quaternary structure, interacts with PEX5.

It is found in the peroxisome matrix. The protein resides in the peroxisome membrane. The catalysed reaction is oxalate + ATP + CoA = oxalyl-CoA + AMP + diphosphate. Catalyzes the first step in a degradation pathway of oxalate to CO(2) to protect the cell against the harmful effects of oxalate derived from endogenous processes or an environmental sources. The polypeptide is Oxalate--CoA ligase (Saccharomyces cerevisiae (strain ATCC 204508 / S288c) (Baker's yeast)).